The following is a 404-amino-acid chain: XK-related protein 8 (404 aa).

8 consecutive transmembrane segments (helical) span residues Phe-14–Leu-34, Val-44–Phe-64, Ala-169–Tyr-189, Leu-209–Cys-229, Val-232–Ala-252, Ser-262–Phe-282, Ser-293–Cys-313, and Ala-324–Leu-344.

The protein belongs to the XK family.

It localises to the cell membrane. It catalyses the reaction a 1,2-diacyl-sn-glycero-3-phospho-L-serine(in) = a 1,2-diacyl-sn-glycero-3-phospho-L-serine(out). Functionally, phospholipid scramblase that promotes phosphatidylserine exposure on apoptotic cell surface, possibly by mediating phospholipid scrambling. Phosphatidylserine is a specific marker only present at the surface of apoptotic cells and acts as a specific signal for engulfment. In Gasterosteus aculeatus (Three-spined stickleback), this protein is XK-related protein 8.